The following is a 154-amino-acid chain: UPF0178 protein SPO3827 (154 aa).

This sequence belongs to the UPF0178 family.

The sequence is that of UPF0178 protein SPO3827 from Ruegeria pomeroyi (strain ATCC 700808 / DSM 15171 / DSS-3) (Silicibacter pomeroyi).